The chain runs to 80 residues: Raniseptin-7 (80 aa).

The signal sequence occupies residues 1-22 (MAFLKKSLFLVLFLGIVSLSIC). A propeptide spanning residues 23-49 (EEEKREGEEEEKQEEENEELSEEELRE) is cleaved from the precursor. The segment at 27–46 (REGEEEEKQEEENEELSEEE) is disordered. The segment covering 30-44 (EEEEKQEEENEELSE) has biased composition (acidic residues).

It belongs to the frog skin active peptide (FSAP) family. Dermaseptin subfamily. Expressed by the skin glands.

It is found in the secreted. Has antibacterial activity. The protein is Raniseptin-7 of Boana raniceps (Chaco tree frog).